A 336-amino-acid polypeptide reads, in one-letter code: MTLKAGIVGIGMIGSDHLRRLANTVSGVEVVAVCDIVAGRAQAALDKYAIEAKDYNDYHDLINDKDVEVVIITASNEAHADVAVAALNANKYVFCEKPLAVTAADCQRVIEAEQKNGKRMVQIGFMRRYDKGYVQLKNIIDSGEIGQPLMVHGRHYNASTVPEYKTPQAIYETLIHEIDVMHWLLNEDYKTVKVYFPRQSSLVTTLRDPQLVVMETTSGINIVVEVFVNCQYGYDIHCDVTGEKGMAELPTVASAAVRKAAKYSTDILVDWKQRFIDAYDIEFQDFFDRLNAGLPPAGPTSWDGYLAAVTADACVKSQETGNTEIVELPSKPDFYK.

It belongs to the Gfo/Idh/MocA family. Homotetramer.

It carries out the reaction myo-inositol + NAD(+) = scyllo-inosose + NADH + H(+). In terms of biological role, involved in the oxidation of myo-inositol (MI) to 2-keto-myo-inositol (2KMI or 2-inosose). The polypeptide is Inositol 2-dehydrogenase (Salmonella agona (strain SL483)).